Reading from the N-terminus, the 80-residue chain is Acyl carrier protein (80 aa).

Positions 4 to 79 (EAILEKVRSI…DAVKYIEEKQ (76 aa)) constitute a Carrier domain. Serine 39 carries the post-translational modification O-(pantetheine 4'-phosphoryl)serine.

The protein belongs to the acyl carrier protein (ACP) family. Post-translationally, 4'-phosphopantetheine is transferred from CoA to a specific serine of apo-ACP by AcpS. This modification is essential for activity because fatty acids are bound in thioester linkage to the sulfhydryl of the prosthetic group.

It localises to the cytoplasm. The protein operates within lipid metabolism; fatty acid biosynthesis. Carrier of the growing fatty acid chain in fatty acid biosynthesis. This is Acyl carrier protein from Prochlorococcus marinus (strain NATL1A).